A 206-amino-acid polypeptide reads, in one-letter code: Thiamine-phosphate synthase (206 aa).

Residues 35–39 (QLRHK) and Asn-67 contribute to the 4-amino-2-methyl-5-(diphosphooxymethyl)pyrimidine site. Asp-68 and Asp-87 together coordinate Mg(2+). Residue Ser-106 coordinates 4-amino-2-methyl-5-(diphosphooxymethyl)pyrimidine. Position 132 to 134 (132 to 134 (TGS)) interacts with 2-[(2R,5Z)-2-carboxy-4-methylthiazol-5(2H)-ylidene]ethyl phosphate. Lys-135 lines the 4-amino-2-methyl-5-(diphosphooxymethyl)pyrimidine pocket. Residue Gly-163 coordinates 2-[(2R,5Z)-2-carboxy-4-methylthiazol-5(2H)-ylidene]ethyl phosphate.

Belongs to the thiamine-phosphate synthase family. The cofactor is Mg(2+).

The catalysed reaction is 2-[(2R,5Z)-2-carboxy-4-methylthiazol-5(2H)-ylidene]ethyl phosphate + 4-amino-2-methyl-5-(diphosphooxymethyl)pyrimidine + 2 H(+) = thiamine phosphate + CO2 + diphosphate. The enzyme catalyses 2-(2-carboxy-4-methylthiazol-5-yl)ethyl phosphate + 4-amino-2-methyl-5-(diphosphooxymethyl)pyrimidine + 2 H(+) = thiamine phosphate + CO2 + diphosphate. It catalyses the reaction 4-methyl-5-(2-phosphooxyethyl)-thiazole + 4-amino-2-methyl-5-(diphosphooxymethyl)pyrimidine + H(+) = thiamine phosphate + diphosphate. The protein operates within cofactor biosynthesis; thiamine diphosphate biosynthesis; thiamine phosphate from 4-amino-2-methyl-5-diphosphomethylpyrimidine and 4-methyl-5-(2-phosphoethyl)-thiazole: step 1/1. Its function is as follows. Condenses 4-methyl-5-(beta-hydroxyethyl)thiazole monophosphate (THZ-P) and 2-methyl-4-amino-5-hydroxymethyl pyrimidine pyrophosphate (HMP-PP) to form thiamine monophosphate (TMP). The polypeptide is Thiamine-phosphate synthase (Chlorobium phaeobacteroides (strain DSM 266 / SMG 266 / 2430)).